The following is a 523-amino-acid chain: DNA-directed RNA polymerase subunit Rpo2N (523 aa).

A disordered region spans residues 501–523; sequence SSMGVEGIPGISMETTSTTSADD. A compositionally biased stretch (polar residues) spans 513–523; the sequence is METTSTTSADD.

This sequence belongs to the RNA polymerase beta chain family. As to quaternary structure, part of the RNA polymerase complex.

Its subcellular location is the cytoplasm. It catalyses the reaction RNA(n) + a ribonucleoside 5'-triphosphate = RNA(n+1) + diphosphate. DNA-dependent RNA polymerase (RNAP) catalyzes the transcription of DNA into RNA using the four ribonucleoside triphosphates as substrates. The Rpo2 subunit (Rpo2N and Rpo2C in this organism) is implicated in DNA promoter recognition and in nucleotide binding. The protein is DNA-directed RNA polymerase subunit Rpo2N of Halobacterium salinarum (strain ATCC 29341 / DSM 671 / R1).